The chain runs to 93 residues: Small ribosomal subunit protein uS19 (93 aa).

Belongs to the universal ribosomal protein uS19 family.

Functionally, protein S19 forms a complex with S13 that binds strongly to the 16S ribosomal RNA. This chain is Small ribosomal subunit protein uS19, found in Nautilia profundicola (strain ATCC BAA-1463 / DSM 18972 / AmH).